The following is a 315-amino-acid chain: Aspartate carbamoyltransferase catalytic subunit (315 aa).

The carbamoyl phosphate site is built by Arg-65 and Thr-66. Residue Lys-93 participates in L-aspartate binding. Positions 115, 145, and 148 each coordinate carbamoyl phosphate. The L-aspartate site is built by Arg-179 and Arg-234. 2 residues coordinate carbamoyl phosphate: Gly-275 and Pro-276.

Belongs to the aspartate/ornithine carbamoyltransferase superfamily. ATCase family. In terms of assembly, heterododecamer (2C3:3R2) of six catalytic PyrB chains organized as two trimers (C3), and six regulatory PyrI chains organized as three dimers (R2).

The catalysed reaction is carbamoyl phosphate + L-aspartate = N-carbamoyl-L-aspartate + phosphate + H(+). It functions in the pathway pyrimidine metabolism; UMP biosynthesis via de novo pathway; (S)-dihydroorotate from bicarbonate: step 2/3. Functionally, catalyzes the condensation of carbamoyl phosphate and aspartate to form carbamoyl aspartate and inorganic phosphate, the committed step in the de novo pyrimidine nucleotide biosynthesis pathway. The protein is Aspartate carbamoyltransferase catalytic subunit of Xanthomonas campestris pv. campestris (strain 8004).